A 168-amino-acid chain; its full sequence is NADH dehydrogenase [ubiquinone] 1 alpha subcomplex assembly factor 2 (168 aa).

Positions 112-168 (GKETSEELLPSPTATQVKGHASAPYFGREEPSVAPTSTGKTFQPGSWTPEDGKRQSQ) are disordered. Position 133 is a phosphoserine (S133). Residues 145-157 (APTSTGKTFQPGS) show a composition bias toward polar residues.

It belongs to the complex I NDUFA12 subunit family. As to quaternary structure, interacts with ARMC9.

It is found in the mitochondrion. Acts as a molecular chaperone for mitochondrial complex I assembly. Complex I functions in the transfer of electrons from NADH to the respiratory chain. The immediate electron acceptor for the enzyme is believed to be ubiquinone. Is involved in the initial steps of cilia formation, including removal of CP110 from the mother centrioles, docking of membrane vesicles to the mother centrioles, and establishment of the transition zone. The chain is NADH dehydrogenase [ubiquinone] 1 alpha subcomplex assembly factor 2 (Ndufaf2) from Mus musculus (Mouse).